We begin with the raw amino-acid sequence, 422 residues long: Histidinol dehydrogenase (422 aa).

Residues Tyr-123, Gln-183, and Asn-206 each contribute to the NAD(+) site. Substrate-binding residues include Ser-229, Gln-251, and His-254. Gln-251 and His-254 together coordinate Zn(2+). Catalysis depends on proton acceptor residues Glu-320 and His-321. Substrate is bound by residues His-321, Asp-354, Glu-408, and His-413. Asp-354 contacts Zn(2+). Zn(2+) is bound at residue His-413.

The protein belongs to the histidinol dehydrogenase family. The cofactor is Zn(2+).

It catalyses the reaction L-histidinol + 2 NAD(+) + H2O = L-histidine + 2 NADH + 3 H(+). It participates in amino-acid biosynthesis; L-histidine biosynthesis; L-histidine from 5-phospho-alpha-D-ribose 1-diphosphate: step 9/9. Its function is as follows. Catalyzes the sequential NAD-dependent oxidations of L-histidinol to L-histidinaldehyde and then to L-histidine. The sequence is that of Histidinol dehydrogenase from Haloarcula marismortui (strain ATCC 43049 / DSM 3752 / JCM 8966 / VKM B-1809) (Halobacterium marismortui).